Here is an 81-residue protein sequence, read N- to C-terminus: MEARTFWLLVVAVLALGSSSSTGQYVGLSANQCAVPAKDRVDCGYPEVTPEQCNNRGCCFDSSIHGVPWCFKPLQEAECTF.

Residues 1–23 (MEARTFWLLVVAVLALGSSSSTG) form the signal peptide. The region spanning 31 to 74 (NQCAVPAKDRVDCGYPEVTPEQCNNRGCCFDSSIHGVPWCFKPL) is the P-type domain. 3 disulfide bridges follow: Cys33–Cys59, Cys43–Cys58, and Cys53–Cys70.

As to quaternary structure, monomer. Homodimer; disulfide-linked.

The protein resides in the secreted. It is found in the extracellular space. The protein localises to the extracellular matrix. Its subcellular location is the cytoplasm. In terms of biological role, involved in the maintenance and repair of the intestinal mucosa. Promotes the mobility of epithelial cells in healing processes (motogen). This is Trefoil factor 3 (TFF3) from Bos taurus (Bovine).